Reading from the N-terminus, the 238-residue chain is LexA repressor (238 aa).

The segment at residues 26–46 is a DNA-binding region (H-T-H motif); the sequence is FDEMKDALDLRSKSGIHRLIT. Active-site for autocatalytic cleavage activity residues include Ser159 and Lys197.

Belongs to the peptidase S24 family. As to quaternary structure, homodimer.

It carries out the reaction Hydrolysis of Ala-|-Gly bond in repressor LexA.. Represses a number of genes involved in the response to DNA damage (SOS response), including recA and lexA. In the presence of single-stranded DNA, RecA interacts with LexA causing an autocatalytic cleavage which disrupts the DNA-binding part of LexA, leading to derepression of the SOS regulon and eventually DNA repair. The chain is LexA repressor from Rhodobacter capsulatus (Rhodopseudomonas capsulata).